Consider the following 226-residue polypeptide: PKHD-type hydroxylase TERTU_2553 (226 aa).

The 100-residue stretch at 78-177 (KIYPPKFNCY…RVASFIWIQS (100 aa)) folds into the Fe2OG dioxygenase domain. Fe cation-binding residues include His-96, Asp-98, and His-158. 2-oxoglutarate is bound at residue Arg-168.

Requires Fe(2+) as cofactor. L-ascorbate serves as cofactor.

The polypeptide is PKHD-type hydroxylase TERTU_2553 (Teredinibacter turnerae (strain ATCC 39867 / T7901)).